The sequence spans 528 residues: MEIPSLNKQQEFTLASVTDLTSPSSSLSSSPVVATFSCVNEVKELRFQESKSSDGFSFDLSSTQLFKLGPLQFTCVSDGSISSAKEKSSFSRGVVIKFRDEKDSKEFCDSFEECKKDDAVKQGSALPNGTVVSANKSKFDDKIEAASAKMYFHYYGQLLHQQNMLQDYVRTGTYHAAVMENRSDFSGRVVVDVGAGSGILSMFAALAGAKHVYAVEASEMAEYARKLIAGNPLLAERITVIKGKIEDIELPEKADVLISEPMGTLLVNERMLETYVIARDRFLSPNGKMFPTVGRIHMAPFADEFLFVEMANKALFWQQQNYYGVDLTPLYVSAHQGYFSQPVVDAFDPRLLVAPSMFHVIDFTMMTEEQFYEIDIPLKFTASVCTRIHGLACWFDVLFDGSTVQRWFTTAPGAPTTHWYQIRCVLSQPIHVMAGQEITGRLHLIAHSAQSYTINLTLSAKMWGPGANQGGILQTSSCKLDLKEPYYRMSQPQVYPTQEPPAQSQDIHIHSDDLEELELLQQNANAQL.

M1 is modified (N-acetylmethionine). In terms of domain architecture, SAM-dependent MTase PRMT-type spans 144 to 459; it reads EAASAKMYFH…QSYTINLTLS (316 aa). Positions 161, 170, 194, 216, and 246 each coordinate S-adenosyl-L-methionine. Catalysis depends on residues E260 and E269. T274 lines the S-adenosyl-L-methionine pocket.

Belongs to the class I-like SAM-binding methyltransferase superfamily. Protein arginine N-methyltransferase family.

Its subcellular location is the nucleus. The protein localises to the cytoplasm. It catalyses the reaction L-arginyl-[protein] + 2 S-adenosyl-L-methionine = N(omega),N(omega)-dimethyl-L-arginyl-[protein] + 2 S-adenosyl-L-homocysteine + 2 H(+). Its function is as follows. Methylates (mono- and asymmetric dimethylation) the guanidino nitrogens of arginyl residues in several proteins involved in DNA packaging, transcription regulation, and mRNA stability. Recruited to promoters upon gene activation, methylates histone H3 and activates transcription via chromatin remodeling. The sequence is that of Probable histone-arginine methyltransferase 1.4 (PRMT14) from Arabidopsis thaliana (Mouse-ear cress).